A 182-amino-acid chain; its full sequence is Large ribosomal subunit protein uL5 (182 aa).

The protein belongs to the universal ribosomal protein uL5 family. Part of the 50S ribosomal subunit; part of the 5S rRNA/L5/L18/L25 subcomplex. Contacts the 5S rRNA and the P site tRNA. Forms a bridge to the 30S subunit in the 70S ribosome.

Its function is as follows. This is one of the proteins that bind and probably mediate the attachment of the 5S RNA into the large ribosomal subunit, where it forms part of the central protuberance. In the 70S ribosome it contacts protein S13 of the 30S subunit (bridge B1b), connecting the 2 subunits; this bridge is implicated in subunit movement. Contacts the P site tRNA; the 5S rRNA and some of its associated proteins might help stabilize positioning of ribosome-bound tRNAs. The sequence is that of Large ribosomal subunit protein uL5 from Borrelia turicatae (strain 91E135).